A 242-amino-acid chain; its full sequence is Ribonuclease 3 (242 aa).

Residues 10–146 enclose the RNase III domain; that stretch reads LQNFNKKFAD…FVGALYLDQG (137 aa). Glu-59 serves as a coordination point for Mg(2+). Asp-63 is a catalytic residue. Mg(2+) is bound by residues Asp-132 and Glu-135. Glu-135 is an active-site residue. The 70-residue stretch at 172–241 folds into the DRBM domain; sequence DFKTQFQELI…AEKAYNDMKK (70 aa). The tract at residues 216–242 is disordered; sequence VAKGQGRTKKESEQKAAEKAYNDMKKK. The span at 223–242 shows a compositional bias: basic and acidic residues; sequence TKKESEQKAAEKAYNDMKKK.

Belongs to the ribonuclease III family. In terms of assembly, homodimer. It depends on Mg(2+) as a cofactor.

The protein resides in the cytoplasm. The catalysed reaction is Endonucleolytic cleavage to 5'-phosphomonoester.. Digests double-stranded RNA. Involved in the processing of primary rRNA transcript to yield the immediate precursors to the large and small rRNAs (23S and 16S). Processes some mRNAs, and tRNAs when they are encoded in the rRNA operon. Processes pre-crRNA and tracrRNA of type II CRISPR loci if present in the organism. In Staphylococcus carnosus (strain TM300), this protein is Ribonuclease 3.